The primary structure comprises 250 residues: Uracil-DNA glycosylase (250 aa).

Residue aspartate 78 is the Proton acceptor of the active site.

Belongs to the uracil-DNA glycosylase (UDG) superfamily. UNG family.

It localises to the cytoplasm. It catalyses the reaction Hydrolyzes single-stranded DNA or mismatched double-stranded DNA and polynucleotides, releasing free uracil.. Its function is as follows. Excises uracil residues from the DNA which can arise as a result of misincorporation of dUMP residues by DNA polymerase or due to deamination of cytosine. The polypeptide is Uracil-DNA glycosylase (Albidiferax ferrireducens (strain ATCC BAA-621 / DSM 15236 / T118) (Rhodoferax ferrireducens)).